Here is a 97-residue protein sequence, read N- to C-terminus: YcgL domain-containing protein PST_1364 (97 aa).

The YcgL domain maps to 3-87; that stretch reads LICSIYKSPR…AEDEYIEHLP (85 aa).

The protein is YcgL domain-containing protein PST_1364 of Stutzerimonas stutzeri (strain A1501) (Pseudomonas stutzeri).